The sequence spans 630 residues: Adagio-like protein 1 (630 aa).

The interval 1 to 36 (MEWDSESDGAGSIGAGEEEEEEEEEEEGGFGGGGGG) is disordered. The segment covering 16 to 28 (GEEEEEEEEEEEG) has biased composition (acidic residues). Residues 48–127 (IEGMLRASGP…SEIRKCIDNG (80 aa)) enclose the PAS domain. Cys-95 carries the post-translational modification S-4a-FMN cysteine. Residues 216–262 (SSLFQLTDEVLCQSILSRLSPRDIASVSSVCRRLYLLTRNEDLWRMV) enclose the F-box domain. 4 Kelch repeats span residues 378 to 428 (LLVV…TLDG), 430 to 481 (KLVV…VYGG), 483 to 535 (KILM…AGPP), and 549 to 601 (RVLI…VVGG).

Belongs to the ADAGIO family. Post-translationally, FMN binds covalently to cysteine after exposure to blue light and is reversed in the dark.

The protein localises to the nucleus. It participates in protein modification; protein ubiquitination. In terms of biological role, component of an E3 ubiquitin ligase complex that plays a central role in blue light-dependent circadian cycles. Acts as a blue light photoreceptor, due to the presence of FMN, that mediates light-regulated protein degradation of critical clock components by targeting them to the proteasome complex. This Oryza sativa subsp. japonica (Rice) protein is Adagio-like protein 1.